Reading from the N-terminus, the 299-residue chain is Taste receptor type 2 member 1 (299 aa).

At Met1–Tyr9 the chain is on the extracellular side. A helical transmembrane segment spans residues Phe10–Val30. Residues Asn31 to Arg55 lie on the Cytoplasmic side of the membrane. A helical membrane pass occupies residues Ile56–Ile76. Over Thr77–Ser81 the chain is Extracellular. A helical transmembrane segment spans residues Cys82–Phe102. The Cytoplasmic segment spans residues Tyr103–Lys124. Residues Ser125 to Ile145 traverse the membrane as a helical segment. Over Lys146–Ser178 the chain is Extracellular. A glycan (N-linked (GlcNAc...) asparagine) is linked at Asn163. A helical membrane pass occupies residues Phe179 to Phe199. Residues Ser200 to Ala222 are Cytoplasmic-facing. The chain crosses the membrane as a helical span at residues His223–Ile243. Residues Lys244–Phe257 are Extracellular-facing. A helical membrane pass occupies residues Val258–Ile278. Over Leu279–Gln299 the chain is Cytoplasmic.

It belongs to the G-protein coupled receptor T2R family.

The protein resides in the membrane. Receptor that may play a role in the perception of bitterness and is gustducin-linked. May play a role in sensing the chemical composition of the gastrointestinal content. The activity of this receptor may stimulate alpha gustducin, mediate PLC-beta-2 activation and lead to the gating of TRPM5. The polypeptide is Taste receptor type 2 member 1 (TAS2R1) (Chlorocebus aethiops (Green monkey)).